Here is a 347-residue protein sequence, read N- to C-terminus: Dihydroorotase (347 aa).

Histidine 17 and histidine 19 together coordinate Zn(2+). Substrate is bound by residues histidine 19–arginine 21 and asparagine 45. Residues lysine 103, histidine 140, and histidine 178 each coordinate Zn(2+). N6-carboxylysine is present on lysine 103. A substrate-binding site is contributed by histidine 140. Leucine 223 contributes to the substrate binding site. Aspartate 251 is a binding site for Zn(2+). Aspartate 251 is an active-site residue. 2 residues coordinate substrate: histidine 255 and alanine 267.

It belongs to the metallo-dependent hydrolases superfamily. DHOase family. Class II DHOase subfamily. In terms of assembly, homodimer. The cofactor is Zn(2+).

The enzyme catalyses (S)-dihydroorotate + H2O = N-carbamoyl-L-aspartate + H(+). The protein operates within pyrimidine metabolism; UMP biosynthesis via de novo pathway; (S)-dihydroorotate from bicarbonate: step 3/3. In terms of biological role, catalyzes the reversible cyclization of carbamoyl aspartate to dihydroorotate. The protein is Dihydroorotase of Citrobacter koseri (strain ATCC BAA-895 / CDC 4225-83 / SGSC4696).